The chain runs to 263 residues: 5'-nucleotidase SurE (263 aa).

A divalent metal cation-binding residues include D11, D12, S42, and N96.

This sequence belongs to the SurE nucleotidase family. Requires a divalent metal cation as cofactor.

It localises to the cytoplasm. The catalysed reaction is a ribonucleoside 5'-phosphate + H2O = a ribonucleoside + phosphate. Functionally, nucleotidase that shows phosphatase activity on nucleoside 5'-monophosphates. This chain is 5'-nucleotidase SurE, found in Methanocorpusculum labreanum (strain ATCC 43576 / DSM 4855 / Z).